Consider the following 115-residue polypeptide: Alpha-endosulfine (115 aa).

Positions 1–10 are enriched in polar residues; sequence MSSENLSDTQ. The disordered stretch occupies residues 1 to 27; the sequence is MSSENLSDTQMEYEDEKQDSQEKNANL. Ser65 is modified (phosphoserine; by GWL). Residues 77–115 form a disordered region; sequence NKQLPVAGPDKNLVTGDHIPTPQDLPQRRSSLVTSKLAG. The segment covering 104–115 has biased composition (polar residues); that stretch reads RRSSLVTSKLAG.

The protein belongs to the endosulfine family. Phosphorylation at Ser-65 by gwl during mitosis is essential for interaction with ppp2r2d (PR55-delta) and subsequent inactivation of PP2A.

It localises to the cytoplasm. In terms of biological role, protein phosphatase inhibitor that specifically inhibits protein phosphatase 2A (PP2A) during mitosis. When phosphorylated at Ser-67 during mitosis, specifically interacts with ppp2r2d (PR55-delta) and inhibits its activity, leading to inactivation of PP2A, an essential condition to keep cyclin-B1-CDK1 activity high during M phase. This chain is Alpha-endosulfine (ensa), found in Salmo salar (Atlantic salmon).